We begin with the raw amino-acid sequence, 57 residues long: Large ribosomal subunit protein bL32 (57 aa).

Basic residues predominate over residues 1 to 22; that stretch reads MAVPKKKTSKAKRDQRRAHWRR. The segment at 1–35 is disordered; sequence MAVPKKKTSKAKRDQRRAHWRRQASSQAQKALSLG.

It belongs to the bacterial ribosomal protein bL32 family.

This chain is Large ribosomal subunit protein bL32 (rpmF), found in Synechocystis sp. (strain ATCC 27184 / PCC 6803 / Kazusa).